Here is a 1054-residue protein sequence, read N- to C-terminus: Translation initiation factor IF-2 (1054 aa).

4 disordered regions span residues 57–213, 225–248, 287–315, and 401–436; these read DKRK…AASC, DPLA…NPGD, SGRP…HGLQ, and DHAG…KQEL. The segment covering 92 to 104 has biased composition (polar residues); that stretch reads QEPSQAASDVSSP. A compositionally biased stretch (low complexity) spans 111–213; the sequence is EASGAEAAAS…VTSGRRAASC (103 aa). The span at 401 to 418 shows a compositional bias: basic and acidic residues; that stretch reads DHAGRGRELVDVSKNKDK. In terms of domain architecture, tr-type G spans 552–721; sequence TRPPVVTVMG…VLQAEVLELT (170 aa). Residues 561–568 form a G1 region; it reads GHVDHGKT. Residue 561-568 coordinates GTP; it reads GHVDHGKT. The interval 586 to 590 is G2; sequence GITQH. A G3 region spans residues 607-610; that stretch reads DTPG. Residues 607–611 and 661–664 contribute to the GTP site; these read DTPGH and NKMD. A G4 region spans residues 661–664; the sequence is NKMD. A G5 region spans residues 697–699; it reads SAK.

The protein belongs to the TRAFAC class translation factor GTPase superfamily. Classic translation factor GTPase family. IF-2 subfamily.

The protein localises to the cytoplasm. One of the essential components for the initiation of protein synthesis. Protects formylmethionyl-tRNA from spontaneous hydrolysis and promotes its binding to the 30S ribosomal subunits. Also involved in the hydrolysis of GTP during the formation of the 70S ribosomal complex. The polypeptide is Translation initiation factor IF-2 (infB) (Stigmatella aurantiaca).